A 152-amino-acid chain; its full sequence is Deoxyuridine 5'-triphosphate nucleotidohydrolase (152 aa).

Residues 71 to 73, Asn-84, 88 to 90, and Met-98 contribute to the substrate site; these read RSG and LID.

Belongs to the dUTPase family. The cofactor is Mg(2+).

It catalyses the reaction dUTP + H2O = dUMP + diphosphate + H(+). It functions in the pathway pyrimidine metabolism; dUMP biosynthesis; dUMP from dCTP (dUTP route): step 2/2. Functionally, this enzyme is involved in nucleotide metabolism: it produces dUMP, the immediate precursor of thymidine nucleotides and it decreases the intracellular concentration of dUTP so that uracil cannot be incorporated into DNA. The sequence is that of Deoxyuridine 5'-triphosphate nucleotidohydrolase from Salmonella agona (strain SL483).